Consider the following 40-residue polypeptide: Photosystem II reaction center protein J (40 aa).

A helical membrane pass occupies residues 8-28 (IPLWVIGTVAGILVIGIIGIF).

The protein belongs to the PsbJ family. In terms of assembly, PSII is composed of 1 copy each of membrane proteins PsbA, PsbB, PsbC, PsbD, PsbE, PsbF, PsbH, PsbI, PsbJ, PsbK, PsbL, PsbM, PsbT, PsbX, PsbY, PsbZ, Psb30/Ycf12, at least 3 peripheral proteins of the oxygen-evolving complex and a large number of cofactors. It forms dimeric complexes.

The protein localises to the plastid. Its subcellular location is the chloroplast thylakoid membrane. Its function is as follows. One of the components of the core complex of photosystem II (PSII). PSII is a light-driven water:plastoquinone oxidoreductase that uses light energy to abstract electrons from H(2)O, generating O(2) and a proton gradient subsequently used for ATP formation. It consists of a core antenna complex that captures photons, and an electron transfer chain that converts photonic excitation into a charge separation. This Lobularia maritima (Sweet alyssum) protein is Photosystem II reaction center protein J.